We begin with the raw amino-acid sequence, 649 residues long: WEB family protein At5g55860 (649 aa).

Coiled-coil stretches lie at residues 59–227 (EKVL…ACSQ), 267–356 (EFAK…IESV), and 391–461 (TINQ…MSEK). Residues 443 to 453 (EAKAAETKALE) show a composition bias toward basic and acidic residues. The interval 443–483 (EAKAAETKALEQIKSMSEKTNAARNSTSSESGSQSITLSQE) is disordered. Positions 456–467 (KSMSEKTNAARN) are enriched in polar residues. The segment covering 468-482 (STSSESGSQSITLSQ) has biased composition (low complexity). The stretch at 505–549 (AALAQVEAVRASENETLKKLETTQEEIKKLKTATEEALKKAAMAD) forms a coiled coil. The interval 583–611 (MKMASESSPQQHYKAPKQKPVNNKLEKTK) is disordered.

It belongs to the WEB family.

The protein is WEB family protein At5g55860 of Arabidopsis thaliana (Mouse-ear cress).